A 312-amino-acid chain; its full sequence is Porphobilinogen deaminase (312 aa).

The residue at position 241 (cysteine 241) is an S-(dipyrrolylmethanemethyl)cysteine.

This sequence belongs to the HMBS family. Monomer. Dipyrromethane is required as a cofactor.

It carries out the reaction 4 porphobilinogen + H2O = hydroxymethylbilane + 4 NH4(+). It functions in the pathway porphyrin-containing compound metabolism; protoporphyrin-IX biosynthesis; coproporphyrinogen-III from 5-aminolevulinate: step 2/4. In terms of biological role, tetrapolymerization of the monopyrrole PBG into the hydroxymethylbilane pre-uroporphyrinogen in several discrete steps. The sequence is that of Porphobilinogen deaminase from Pelotomaculum thermopropionicum (strain DSM 13744 / JCM 10971 / SI).